Reading from the N-terminus, the 316-residue chain is Pantothenate kinase (316 aa).

ATP is bound at residue 95-102 (GSVAVGKS).

It belongs to the prokaryotic pantothenate kinase family.

It localises to the cytoplasm. It carries out the reaction (R)-pantothenate + ATP = (R)-4'-phosphopantothenate + ADP + H(+). It participates in cofactor biosynthesis; coenzyme A biosynthesis; CoA from (R)-pantothenate: step 1/5. The protein is Pantothenate kinase of Shewanella sp. (strain MR-7).